Consider the following 122-residue polypeptide: Large ribosomal subunit protein bL17 (122 aa).

The protein belongs to the bacterial ribosomal protein bL17 family. Part of the 50S ribosomal subunit. Contacts protein L32.

The sequence is that of Large ribosomal subunit protein bL17 from Neisseria meningitidis serogroup B (strain ATCC BAA-335 / MC58).